A 217-amino-acid polypeptide reads, in one-letter code: Ribosome maturation factor RimP (217 aa).

It belongs to the RimP family.

It is found in the cytoplasm. Its function is as follows. Required for maturation of 30S ribosomal subunits. This Nocardia farcinica (strain IFM 10152) protein is Ribosome maturation factor RimP.